A 203-amino-acid chain; its full sequence is Peptidyl-tRNA hydrolase (203 aa).

Tyr26 contacts tRNA. The Proton acceptor role is filled by His31. Positions 82, 84, and 130 each coordinate tRNA.

This sequence belongs to the PTH family. Monomer.

Its subcellular location is the cytoplasm. The enzyme catalyses an N-acyl-L-alpha-aminoacyl-tRNA + H2O = an N-acyl-L-amino acid + a tRNA + H(+). Hydrolyzes ribosome-free peptidyl-tRNAs (with 1 or more amino acids incorporated), which drop off the ribosome during protein synthesis, or as a result of ribosome stalling. Functionally, catalyzes the release of premature peptidyl moieties from peptidyl-tRNA molecules trapped in stalled 50S ribosomal subunits, and thus maintains levels of free tRNAs and 50S ribosomes. The polypeptide is Peptidyl-tRNA hydrolase (Streptomyces avermitilis (strain ATCC 31267 / DSM 46492 / JCM 5070 / NBRC 14893 / NCIMB 12804 / NRRL 8165 / MA-4680)).